The primary structure comprises 453 residues: uncharacterized protein (453 aa).

Over 1–110 the chain is Cytoplasmic; that stretch reads MIQTQSTAIK…KAILRTFNHP (110 aa). Residues 111–131 form a helical membrane-spanning segment; the sequence is IALTELQFLVSAVLCVGFASI. Residues 132 to 172 lie on the Lumenal side of the membrane; sequence VNLFRLPRLKHTKFSKALNSFPDGILPEYLDGNFRSSILHK. A helical membrane pass occupies residues 173–193; that stretch reads FLVPSKLVLMTTFPMGIFQFI. Residues 194–201 lie on the Cytoplasmic side of the membrane; the sequence is GHITSHKA. The helical transmembrane segment at 202–222 threads the bilayer; the sequence is VSMIPVSLVHSVKALSPIITV. Residues 223 to 234 are Lumenal-facing; sequence GYYKFFEHRYYN. Residues 235 to 255 form a helical membrane-spanning segment; that stretch reads SMTYYTLLLLIFGVMTTCWST. Topologically, residues 256–269 are cytoplasmic; the sequence is HGSKRASDNKSGSS. Residues 270–290 form a helical membrane-spanning segment; it reads LIGLLFAFISMIIFVAQNIFA. Residues 291–332 are Lumenal-facing; that stretch reads KNILTIRRKVGILPSSSTDDVTSKEGQPSLDKTRFSPLQVDK. Residues 333–353 traverse the membrane as a helical segment; the sequence is ITILFYCSCIGFSLTLLPFLT. The Cytoplasmic segment spans residues 354–371; that stretch reads GELMHGGSVINDLTLETV. Residues 372–392 form a helical membrane-spanning segment; the sequence is ALVAIHGIAHFFQAMLAFQLI. Topologically, residues 393 to 413 are lumenal; that stretch reads GLLSSINYSVANIMKRIVVIS. Residues 414-434 form a helical membrane-spanning segment; that stretch reads VALFWETKLNFFQVFGVILTI. The Cytoplasmic segment spans residues 435-453; that stretch reads AGLYGYDKWGLSKKDGRQA.

Belongs to the TPT transporter family.

Its subcellular location is the membrane. Its function is as follows. Able to suppress the functional loss of YPT1. May form a channel. Protein SLY41 is not essential for cell viability. The SLY41 gene is a multicopy suppressor. This is an uncharacterized protein from Saccharomyces cerevisiae (strain ATCC 204508 / S288c) (Baker's yeast).